The chain runs to 1651 residues: Alsin (1651 aa).

RCC1 repeat units lie at residues 59-108 (DGEV…AVTE), 109-167 (SGVV…ALSL), and 169-218 (REIW…ALVQ). The disordered stretch occupies residues 425–462 (ETAAQSGSASTGPESLKDLREEQVKQESLQGKKSSSLM). Over residues 427–437 (AAQSGSASTGP) the composition is skewed to polar residues. Over residues 439-449 (SLKDLREEQVK) the composition is skewed to basic and acidic residues. The segment covering 450–461 (QESLQGKKSSSL) has biased composition (polar residues). Phosphoserine occurs at positions 459, 460, 477, and 486. Position 504 is a phosphothreonine (Thr504). RCC1 repeat units follow at residues 519–570 (RTEV…ALTA) and 572–621 (SQVY…FLVD). An N6-acetyllysine modification is found at Lys527. The DH domain occupies 684-879 (GYIASLHELA…ESLALHLGKK (196 aa)). Residues 895-1001 (GKMTDSLRKP…RAISQAVDQA (107 aa)) form the PH domain. MORN repeat units lie at residues 1043–1065 (YDGR…DGKM), 1066–1088 (YSGM…NKAL), 1094–1116 (YVGH…SGEV), 1117–1139 (FEGC…KLTS), 1145–1167 (FIGQ…TRGE), 1169–1191 (YMGM…FGLY), 1192–1214 (YEGN…DDTI), and 1215–1238 (YEGE…HGDY). A Phosphoserine modification is found at Ser1329. In terms of domain architecture, VPS9 spans 1507–1651 (KQPDIALLGF…YFQIQREKLN (145 aa)).

Forms a heteromeric complex with ALS2CL. Interacts with ALS2CL.

May act as a GTPase regulator. Controls survival and growth of spinal motoneurons. This chain is Alsin (Als2), found in Mus musculus (Mouse).